A 186-amino-acid chain; its full sequence is MSEPASISTGIAARYATAMFELAEEAKALPALEKDVDALDAALSESADLRDLIHSPIYGRDEASAAIGGVADAMKLQDMTGNTLRLMASKRRLFVLPALLSELRERIADHKGEVTAEVTSAKALTKTQLDKLTKSLKAQVGKTVTVKETVDENIIGGLIVKIGSKMIDTSVRSKLNALQNTMKEVG.

This sequence belongs to the ATPase delta chain family. F-type ATPases have 2 components, F(1) - the catalytic core - and F(0) - the membrane proton channel. F(1) has five subunits: alpha(3), beta(3), gamma(1), delta(1), epsilon(1). CF(0) has four main subunits: a(1), b(1), b'(1) and c(10-14). The alpha and beta chains form an alternating ring which encloses part of the gamma chain. F(1) is attached to F(0) by a central stalk formed by the gamma and epsilon chains, while a peripheral stalk is formed by the delta, b and b' chains.

The protein resides in the cell inner membrane. Functionally, f(1)F(0) ATP synthase produces ATP from ADP in the presence of a proton or sodium gradient. F-type ATPases consist of two structural domains, F(1) containing the extramembraneous catalytic core and F(0) containing the membrane proton channel, linked together by a central stalk and a peripheral stalk. During catalysis, ATP synthesis in the catalytic domain of F(1) is coupled via a rotary mechanism of the central stalk subunits to proton translocation. This protein is part of the stalk that links CF(0) to CF(1). It either transmits conformational changes from CF(0) to CF(1) or is implicated in proton conduction. The chain is ATP synthase subunit delta from Jannaschia sp. (strain CCS1).